A 761-amino-acid chain; its full sequence is Elongation factor G, mitochondrial (761 aa).

A mitochondrion-targeting transit peptide spans 1–42; sequence MSVQKMMRVPRKMVGGRIPFFTCSKVFSGFSRRSFHESPLAR. Residues 68 to 349 form the tr-type G domain; that stretch reads NKLRNIGISA…AIVDYLPNPS (282 aa). GTP-binding positions include 77-84, 148-152, and 202-205; these read AHIDSGKT, DTPGH, and NKMD.

It belongs to the TRAFAC class translation factor GTPase superfamily. Classic translation factor GTPase family. EF-G/EF-2 subfamily. Post-translationally, the precursor is processed in two steps involving mitochondrial intermediate peptidase (MIP) and mitochondrial processing peptidase (MPP).

It is found in the mitochondrion. The protein operates within protein biosynthesis; polypeptide chain elongation. Its function is as follows. Mitochondrial GTPase that catalyzes the GTP-dependent ribosomal translocation step during translation elongation. During this step, the ribosome changes from the pre-translocational (PRE) to the post-translocational (POST) state as the newly formed A-site-bound peptidyl-tRNA and P-site-bound deacylated tRNA move to the P and E sites, respectively. Catalyzes the coordinated movement of the two tRNA molecules, the mRNA and conformational changes in the ribosome. The protein is Elongation factor G, mitochondrial of Saccharomyces cerevisiae (strain YJM789) (Baker's yeast).